A 359-amino-acid polypeptide reads, in one-letter code: Probable D-xylulose reductase A (359 aa).

Zn(2+) contacts are provided by Cys47, His72, and Glu73. Position 182–187 (182–187 (GAGPVG)) interacts with NAD(+).

The protein belongs to the zinc-containing alcohol dehydrogenase family. Zn(2+) serves as cofactor.

It catalyses the reaction xylitol + NAD(+) = D-xylulose + NADH + H(+). Its pathway is carbohydrate degradation; L-arabinose degradation via L-arabinitol; D-xylulose 5-phosphate from L-arabinose (fungal route): step 4/5. Functionally, xylitol dehydrogenase which catalyzes the conversion of xylitol to D-xylulose. Xylose is a major component of hemicelluloses such as xylan. Most fungi utilize D-xylose via three enzymatic reactions, xylose reductase (XR), xylitol dehydrogenase (XDH), and xylulokinase, to form xylulose 5-phosphate, which enters pentose phosphate pathway. This is Probable D-xylulose reductase A (xdhA) from Emericella nidulans (strain FGSC A4 / ATCC 38163 / CBS 112.46 / NRRL 194 / M139) (Aspergillus nidulans).